We begin with the raw amino-acid sequence, 132 residues long: Small ribosomal subunit protein uS8 (132 aa).

Belongs to the universal ribosomal protein uS8 family. In terms of assembly, part of the 30S ribosomal subunit. Contacts proteins S5 and S12.

Functionally, one of the primary rRNA binding proteins, it binds directly to 16S rRNA central domain where it helps coordinate assembly of the platform of the 30S subunit. This is Small ribosomal subunit protein uS8 from Alkaliphilus metalliredigens (strain QYMF).